The primary structure comprises 649 residues: Cysteine-rich receptor-like protein kinase 2 (649 aa).

The N-terminal stretch at 1-29 is a signal peptide; it reads MKKEPVHILPLYLPCLLMFLLSSLRQITG. Residues 30–258 are Extracellular-facing; sequence DARARAVKVT…IPRNGRSRGS (229 aa). Gnk2-homologous domains follow at residues 33 to 134 and 139 to 245; these read ARAV…NYSF and KGPE…DQDF. 5 N-linked (GlcNAc...) asparagine glycosylation sites follow: N47, N131, N149, N154, and N214. Residues 259–279 traverse the membrane as a helical segment; that stretch reads VVVIVVSVLSSVVVFMIGVAV. Residues 280–649 are Cytoplasmic-facing; the sequence is SVYICKRRTI…TVSQSSFYGR (370 aa). Positions 325–608 constitute a Protein kinase domain; it reads FDNANKLGQG…HMLKNKEEVL (284 aa). ATP is bound by residues 331–339 and K353; that span reads LGQGGFGTV. Y398 is subject to Phosphotyrosine. D450 (proton acceptor) is an active-site residue. Phosphoserine is present on residues S454 and S483. Phosphothreonine is present on residues T484 and T489. At Y497 the chain carries Phosphotyrosine.

This sequence belongs to the protein kinase superfamily. Ser/Thr protein kinase family. CRK subfamily.

Its subcellular location is the membrane. The enzyme catalyses L-seryl-[protein] + ATP = O-phospho-L-seryl-[protein] + ADP + H(+). It carries out the reaction L-threonyl-[protein] + ATP = O-phospho-L-threonyl-[protein] + ADP + H(+). This is Cysteine-rich receptor-like protein kinase 2 (CRK2) from Arabidopsis thaliana (Mouse-ear cress).